The following is a 318-amino-acid chain: Ferrochelatase (318 aa).

Fe cation contacts are provided by His-186 and Glu-264.

The protein belongs to the ferrochelatase family.

The protein localises to the cytoplasm. The enzyme catalyses heme b + 2 H(+) = protoporphyrin IX + Fe(2+). It functions in the pathway porphyrin-containing compound metabolism; protoheme biosynthesis; protoheme from protoporphyrin-IX: step 1/1. Functionally, catalyzes the ferrous insertion into protoporphyrin IX. The polypeptide is Ferrochelatase (Chlamydia abortus (strain DSM 27085 / S26/3) (Chlamydophila abortus)).